The primary structure comprises 354 residues: Stimulator of interferon genes protein 3 (354 aa).

4 helical membrane passes run V20–W40, I48–I68, Y101–L121, and Y132–I152. Positions 178, 183, 250, 251, 253, 272, 275, and 276 each coordinate 3',3'-cGAMP.

It belongs to the STING family.

The protein resides in the membrane. Its function is as follows. Facilitator of innate immune signaling that acts as a sensor of second messenger signals produced by cyclic GMP-AMP synthase-like receptors (cGLRs) and promotes the production of type I interferon. Innate immune response is triggered in response to nucleotides from viruses and bacteria delivered to the cytoplasm. Acts by binding cyclic dinucleotides: recognizes and binds cyclic 3'-3' linked cGAMP (3'-3'-cGAMP), cyclic di-AMP (3',3'-c-di-AMP) and cyclic di-GMP (3',3'-c-di-GMP) second messengers produced by cGLRs in response to nucleotides in the cytosol, such as double-stranded RNA (dsRNA). Upon binding to 3'-3'-cGAMP, 3',3'-c-di-AMP or 3',3'-c-di-GMP, oligomerizes and promotes the recruitment and subsequent activation of the transcription factor IRF3 to induce expression of type I interferon. This chain is Stimulator of interferon genes protein 3, found in Stylophora pistillata (Smooth cauliflower coral).